Reading from the N-terminus, the 175-residue chain is Granulocyte colony-stimulating factor (175 aa).

Disulfide bonds link C37-C43 and C65-C75. T134 carries an O-linked (GalNAc...) threonine glycan.

Belongs to the IL-6 superfamily. Monomer. Post-translationally, O-glycosylated.

The protein resides in the secreted. Its function is as follows. Granulocyte/macrophage colony-stimulating factors are cytokines that act in hematopoiesis by controlling the production, differentiation, and function of 2 related white cell populations of the blood, the granulocytes and the monocytes-macrophages. This CSF induces granulocytes. This Canis lupus familiaris (Dog) protein is Granulocyte colony-stimulating factor (CSF3).